We begin with the raw amino-acid sequence, 446 residues long: tRNA-2-methylthio-N(6)-dimethylallyladenosine synthase (446 aa).

Positions glutamine 3–histidine 120 constitute an MTTase N-terminal domain. Positions 12, 49, 83, 157, 161, and 164 each coordinate [4Fe-4S] cluster. The Radical SAM core domain maps to serine 143–aspartate 375. The region spanning arginine 378–aspartate 442 is the TRAM domain.

This sequence belongs to the methylthiotransferase family. MiaB subfamily. Monomer. Requires [4Fe-4S] cluster as cofactor.

The protein resides in the cytoplasm. It carries out the reaction N(6)-dimethylallyladenosine(37) in tRNA + (sulfur carrier)-SH + AH2 + 2 S-adenosyl-L-methionine = 2-methylsulfanyl-N(6)-dimethylallyladenosine(37) in tRNA + (sulfur carrier)-H + 5'-deoxyadenosine + L-methionine + A + S-adenosyl-L-homocysteine + 2 H(+). In terms of biological role, catalyzes the methylthiolation of N6-(dimethylallyl)adenosine (i(6)A), leading to the formation of 2-methylthio-N6-(dimethylallyl)adenosine (ms(2)i(6)A) at position 37 in tRNAs that read codons beginning with uridine. The protein is tRNA-2-methylthio-N(6)-dimethylallyladenosine synthase of Hahella chejuensis (strain KCTC 2396).